An 82-amino-acid chain; its full sequence is Sec-independent protein translocase protein TatA (82 aa).

Residues 1-21 (MGGISIWQLLIIAVIVVLLFG) form a helical membrane-spanning segment.

Belongs to the TatA/E family. As to quaternary structure, the Tat system comprises two distinct complexes: a TatABC complex, containing multiple copies of TatA, TatB and TatC subunits, and a separate TatA complex, containing only TatA subunits. Substrates initially bind to the TatABC complex, which probably triggers association of the separate TatA complex to form the active translocon.

The protein localises to the cell inner membrane. Part of the twin-arginine translocation (Tat) system that transports large folded proteins containing a characteristic twin-arginine motif in their signal peptide across membranes. TatA could form the protein-conducting channel of the Tat system. The chain is Sec-independent protein translocase protein TatA from Vibrio cholerae serotype O1 (strain ATCC 39315 / El Tor Inaba N16961).